A 693-amino-acid chain; its full sequence is Putative transmembrane protein ORF68 (693 aa).

A signal peptide spans 1–17 (MILTIILYTLLFSTCSA). The Extracellular segment spans residues 18–666 (QSVHTMPEAV…WLTKFGTGGG (649 aa)). A coiled-coil region spans residues 208–256 (SKAANNRMDALEDGMKNINTRVTETNLLLEKLSTEVTGALTQLENEIKM). A helical membrane pass occupies residues 667–687 (IAGVTIGLLLPILAIVFSCYV). At 688-693 (FCKRRV) the chain is on the cytoplasmic side.

Its subcellular location is the host membrane. This chain is Putative transmembrane protein ORF68, found in Magallana gigas (Pacific oyster).